Here is a 366-residue protein sequence, read N- to C-terminus: A-type ATP synthase subunit C (366 aa).

Belongs to the V-ATPase V0D/AC39 subunit family. As to quaternary structure, has multiple subunits with at least A(3), B(3), C, D, E, F, H, I and proteolipid K(x).

It is found in the cell membrane. In terms of biological role, component of the A-type ATP synthase that produces ATP from ADP in the presence of a proton gradient across the membrane. This chain is A-type ATP synthase subunit C, found in Thermococcus onnurineus (strain NA1).